Reading from the N-terminus, the 291-residue chain is 4-hydroxy-tetrahydrodipicolinate synthase (291 aa).

Thr-45 is a binding site for pyruvate. Residue Tyr-131 is the Proton donor/acceptor of the active site. Lys-159 serves as the catalytic Schiff-base intermediate with substrate. Position 202 (Ile-202) interacts with pyruvate.

This sequence belongs to the DapA family. Homotetramer; dimer of dimers.

The protein localises to the cytoplasm. It carries out the reaction L-aspartate 4-semialdehyde + pyruvate = (2S,4S)-4-hydroxy-2,3,4,5-tetrahydrodipicolinate + H2O + H(+). The protein operates within amino-acid biosynthesis; L-lysine biosynthesis via DAP pathway; (S)-tetrahydrodipicolinate from L-aspartate: step 3/4. Its function is as follows. Catalyzes the condensation of (S)-aspartate-beta-semialdehyde [(S)-ASA] and pyruvate to 4-hydroxy-tetrahydrodipicolinate (HTPA). This Methanosarcina barkeri (strain Fusaro / DSM 804) protein is 4-hydroxy-tetrahydrodipicolinate synthase.